The sequence spans 704 residues: Elongation factor G (704 aa).

The 283-residue stretch at 8 to 290 (EKYRNIGICA…GVVRYLPAPN (283 aa)) folds into the tr-type G domain. Residues 17–24 (AHVDAGKT), 88–92 (DTPGH), and 142–145 (NKMD) contribute to the GTP site.

This sequence belongs to the TRAFAC class translation factor GTPase superfamily. Classic translation factor GTPase family. EF-G/EF-2 subfamily.

Its subcellular location is the cytoplasm. Functionally, catalyzes the GTP-dependent ribosomal translocation step during translation elongation. During this step, the ribosome changes from the pre-translocational (PRE) to the post-translocational (POST) state as the newly formed A-site-bound peptidyl-tRNA and P-site-bound deacylated tRNA move to the P and E sites, respectively. Catalyzes the coordinated movement of the two tRNA molecules, the mRNA and conformational changes in the ribosome. The polypeptide is Elongation factor G (Francisella tularensis subsp. holarctica (strain FTNF002-00 / FTA)).